Reading from the N-terminus, the 228-residue chain is Ribose-5-phosphate isomerase A (228 aa).

Substrate contacts are provided by residues 29–32, 85–88, and 98–101; these read TGST, DGAD, and KGGG. Glu107 serves as the catalytic Proton acceptor. Lys125 lines the substrate pocket.

Belongs to the ribose 5-phosphate isomerase family. Homodimer.

The enzyme catalyses aldehydo-D-ribose 5-phosphate = D-ribulose 5-phosphate. It functions in the pathway carbohydrate degradation; pentose phosphate pathway; D-ribose 5-phosphate from D-ribulose 5-phosphate (non-oxidative stage): step 1/1. In terms of biological role, catalyzes the reversible conversion of ribose-5-phosphate to ribulose 5-phosphate. This is Ribose-5-phosphate isomerase A from Staphylococcus aureus (strain COL).